Consider the following 158-residue polypeptide: NAD(P)H-quinone oxidoreductase subunit J, chloroplastic (158 aa).

The protein belongs to the complex I 30 kDa subunit family. In terms of assembly, NDH is composed of at least 16 different subunits, 5 of which are encoded in the nucleus.

It localises to the plastid. Its subcellular location is the chloroplast thylakoid membrane. It catalyses the reaction a plastoquinone + NADH + (n+1) H(+)(in) = a plastoquinol + NAD(+) + n H(+)(out). It carries out the reaction a plastoquinone + NADPH + (n+1) H(+)(in) = a plastoquinol + NADP(+) + n H(+)(out). In terms of biological role, NDH shuttles electrons from NAD(P)H:plastoquinone, via FMN and iron-sulfur (Fe-S) centers, to quinones in the photosynthetic chain and possibly in a chloroplast respiratory chain. The immediate electron acceptor for the enzyme in this species is believed to be plastoquinone. Couples the redox reaction to proton translocation, and thus conserves the redox energy in a proton gradient. This chain is NAD(P)H-quinone oxidoreductase subunit J, chloroplastic, found in Fagopyrum esculentum subsp. ancestrale (Wild buckwheat).